Here is a 432-residue protein sequence, read N- to C-terminus: Glutamine synthetase, chloroplastic (432 aa).

One can recognise a GS beta-grasp domain in the interval 79–159; the sequence is IIAEYIWIGG…VICDTYTPQG (81 aa). Residues 166 to 432 enclose the GS catalytic domain; sequence KRHKAAQIFS…LAAQKLSLNV (267 aa).

The protein belongs to the glutamine synthetase family. As to quaternary structure, homooctamer.

The protein resides in the plastid. The protein localises to the chloroplast. It carries out the reaction L-glutamate + NH4(+) + ATP = L-glutamine + ADP + phosphate + H(+). Functionally, the light-modulated chloroplast enzyme, encoded by a nuclear gene and expressed primarily in leaves, is responsible for the reassimilation of the ammonia generated by photorespiration. This Daucus carota (Wild carrot) protein is Glutamine synthetase, chloroplastic (GLN2).